Reading from the N-terminus, the 405-residue chain is Corticosteroid-binding globulin (405 aa).

A signal peptide spans 1–22 (MPLLLYTCLLWLSTSGLWTVQA). Residues N26, N31, N96, and N260 are each glycosylated (N-linked (GlcNAc...) asparagine). N286 serves as a coordination point for cortisol. Residues N330 and N369 are each glycosylated (N-linked (GlcNAc...) asparagine). W393 contacts cortisol.

The protein belongs to the serpin family. As to expression, expressed by the liver; secreted in plasma.

It is found in the secreted. Major transport protein for glucocorticoids and progestins in the blood of almost all vertebrate species. The sequence is that of Corticosteroid-binding globulin (SERPINA6) from Pongo abelii (Sumatran orangutan).